The primary structure comprises 456 residues: Exodeoxyribonuclease 7 large subunit (456 aa).

Belongs to the XseA family. In terms of assembly, heterooligomer composed of large and small subunits.

The protein resides in the cytoplasm. It carries out the reaction Exonucleolytic cleavage in either 5'- to 3'- or 3'- to 5'-direction to yield nucleoside 5'-phosphates.. Functionally, bidirectionally degrades single-stranded DNA into large acid-insoluble oligonucleotides, which are then degraded further into small acid-soluble oligonucleotides. This chain is Exodeoxyribonuclease 7 large subunit, found in Lactobacillus gasseri (strain ATCC 33323 / DSM 20243 / BCRC 14619 / CIP 102991 / JCM 1131 / KCTC 3163 / NCIMB 11718 / NCTC 13722 / AM63).